Here is a 603-residue protein sequence, read N- to C-terminus: Elongation factor 4 (603 aa).

The 183-residue stretch at 2–184 (NHIRNFSIIA…AIVHKMPAPR (183 aa)) folds into the tr-type G domain. Residues 14–19 (DHGKST) and 131–134 (NKMD) contribute to the GTP site.

It belongs to the TRAFAC class translation factor GTPase superfamily. Classic translation factor GTPase family. LepA subfamily.

Its subcellular location is the cell inner membrane. The enzyme catalyses GTP + H2O = GDP + phosphate + H(+). Its function is as follows. Required for accurate and efficient protein synthesis under certain stress conditions. May act as a fidelity factor of the translation reaction, by catalyzing a one-codon backward translocation of tRNAs on improperly translocated ribosomes. Back-translocation proceeds from a post-translocation (POST) complex to a pre-translocation (PRE) complex, thus giving elongation factor G a second chance to translocate the tRNAs correctly. Binds to ribosomes in a GTP-dependent manner. This is Elongation factor 4 from Variovorax paradoxus (strain S110).